Here is a 187-residue protein sequence, read N- to C-terminus: dITP/XTP pyrophosphatase (187 aa).

Residue 7–12 participates in substrate binding; sequence TNNPYK. Residues Glu-36 and Asp-65 each coordinate Mg(2+). Catalysis depends on Asp-65, which acts as the Proton acceptor. Substrate is bound by residues Thr-66, 140–143, Lys-163, and 168–169; these read FGYD and HR.

The protein belongs to the HAM1 NTPase family. As to quaternary structure, homodimer. Mg(2+) serves as cofactor.

The catalysed reaction is XTP + H2O = XMP + diphosphate + H(+). It carries out the reaction dITP + H2O = dIMP + diphosphate + H(+). The enzyme catalyses ITP + H2O = IMP + diphosphate + H(+). Pyrophosphatase that catalyzes the hydrolysis of nucleoside triphosphates to their monophosphate derivatives, with a high preference for the non-canonical purine nucleotides XTP (xanthosine triphosphate), dITP (deoxyinosine triphosphate) and ITP. Seems to function as a house-cleaning enzyme that removes non-canonical purine nucleotides from the nucleotide pool, thus preventing their incorporation into DNA/RNA and avoiding chromosomal lesions. This is dITP/XTP pyrophosphatase from Pyrobaculum aerophilum (strain ATCC 51768 / DSM 7523 / JCM 9630 / CIP 104966 / NBRC 100827 / IM2).